A 790-amino-acid polypeptide reads, in one-letter code: Solute carrier family 26 member 9 (790 aa).

Residues 1 to 70 (MNQPRPRYVV…WLPKYKIKDY (70 aa)) lie on the Cytoplasmic side of the membrane. Residues 71–96 (IIPDLLGGLSGGCIQVPQGMAFALLA) form a helical membrane-spanning segment. Topologically, residues 97–100 (NLPA) are extracellular. Residues 101–109 (VNGLYSSFF) traverse the membrane as a helical segment. The Cytoplasmic segment spans residues 110–129 (PLLTYFFLGGIHQMVPGTFA). A helical membrane pass occupies residues 130-142 (VISILVGNICLQL). The Extracellular segment spans residues 143–162 (APESKFQIFNNVTNETYVDT). Residues 163 to 191 (AAMEAERLHVSATLACLTAVIQMALGFMQ) traverse the membrane as a helical segment. The Cytoplasmic portion of the chain corresponds to 192–201 (FGFVAIYLSE). The helical transmembrane segment at 202 to 224 (SFIRGFMTAAGLQILISVLKYIF) threads the bilayer. Residues 225-237 (GLTIPSYTGPGSI) lie on the Extracellular side of the membrane. The helical intramembrane region spans 238–246 (VFTFIDICK). Residues 247-254 (NLPHTNIA) are Extracellular-facing. The chain crosses the membrane as a helical span at residues 255-275 (SLIFALVSGVFLVLVKELNAR). Over 276–286 (YMHKIHFPIPT) the chain is Cytoplasmic. A helical membrane pass occupies residues 287 to 299 (EMIVVVVATAISG). Residues 300–334 (SCKMPKKYHMQIVGEIRQGFPTPVAPMVSQWKGMV) are Extracellular-facing. Residues 335 to 358 (GTAFSLAIVGYVINLAMGRTLASK) form a helical membrane-spanning segment. The Cytoplasmic segment spans residues 359 to 365 (HGYDVDS). The chain crosses the membrane as a helical span at residues 366 to 379 (NQEMIALGCSNFFG). Topologically, residues 380–390 (SFFKIHVICCA) are extracellular. A helical membrane pass occupies residues 391–400 (LSVTLAVDGA). The Cytoplasmic segment spans residues 401 to 405 (GGKSQ). The chain crosses the membrane as a helical span at residues 406-419 (VASLCVSLVVMITM). At 420 to 431 (LVLGSYLYPLPK) the chain is on the extracellular side. Residues 432 to 457 (AVLGALIAVNLKNSLKQLTDPYYLWR) traverse the membrane as a helical segment. Topologically, residues 458 to 461 (KSKL) are cytoplasmic. The chain crosses the membrane as a helical span at residues 462-476 (DCCVWVVSFLSSFFL). The Extracellular segment spans residues 477 to 479 (SLP). The chain crosses the membrane as a helical span at residues 480 to 498 (YGVAVGVAFSILVVIFQTQ). The Cytoplasmic portion of the chain corresponds to 499-790 (FRNGSTLAQV…MFHTETLTAL (292 aa)). The STAS domain occupies 519 to 737 (TYNRAQEIAG…PSIHDAVLFA (219 aa)).

It belongs to the SLC26A/SulP transporter (TC 2.A.53) family. As to quaternary structure, homodimer. Expressed in stomach and trachea. Abundantly expressed in the apical domain of the surface epithelial cells and the deep cells in the gastric gland. Also expressed in heart, brain, lung and liver.

It is found in the cell membrane. Its subcellular location is the endomembrane system. It carries out the reaction chloride(in) = chloride(out). The enzyme catalyses hydrogencarbonate(in) + chloride(out) = hydrogencarbonate(out) + chloride(in). Inhibited by ammonium and thiosulfate. Functionally, ion transporter that can act both as an ion channel and anion exchanger. Mainly acts as a chloride channel, which mediate uncoupled chloride anion transport in an alternate-access mechanism where a saturable binding site is alternately exposed to either one or the other side of the membrane. Also acts as a DIDS- and thiosulfate- sensitive anion exchanger the exchange of chloride for bicarbonate ions across the cell membrane. In Mus musculus (Mouse), this protein is Solute carrier family 26 member 9.